A 146-amino-acid chain; its full sequence is P antigen family member 1 (146 aa).

The disordered stretch occupies residues 16–146; that stretch reads YVESSEESSD…PEEDEGQSQP (131 aa). Positions 19-32 are enriched in acidic residues; that stretch reads SSEESSDEQPDEVE. Serine 63 is subject to Phosphoserine. The span at 79-92 shows a compositional bias: basic and acidic residues; it reads PDTKRVCLRNEEQM. Serine 105 carries the post-translational modification Phosphoserine. The span at 107 to 120 shows a compositional bias: basic and acidic residues; it reads EQVHPKTGCERGDG. A Phosphoserine modification is found at serine 144.

This sequence belongs to the GAGE family. As to expression, isolated from prostate cancer cell lines; expression associated with progression to androgen insensitive phenotype. Expressed in normal testis and at lower level in normal placenta.

This is P antigen family member 1 (PAGE1) from Homo sapiens (Human).